Consider the following 317-residue polypeptide: Transcriptional activator protein med (317 aa).

The signal sequence occupies residues 1-17; sequence MITRLVMIFSVLLLLSG. Cysteine 18 carries N-palmitoyl cysteine lipidation. Residue cysteine 18 is the site of S-diacylglycerol cysteine attachment.

The protein belongs to the BMP lipoprotein family.

The protein localises to the cell membrane. Its function is as follows. Positive activator of the comK gene. The sequence is that of Transcriptional activator protein med (med) from Bacillus subtilis (strain 168).